The following is a 595-amino-acid chain: Pentatricopeptide repeat-containing protein At4g21065 (595 aa).

PPR repeat units follow at residues 84-118 (NVFI…GLVE), 120-154 (DTHT…GFGS), 155-185 (LIYV…MPEK), 186-220 (DLVA…GIKP), 221-255 (DGFT…GLTR), 256-290 (NLHS…NSVS), 291-317 (WTSL…MEST), 323-353 (CEIT…MREE), and 359-389 (RIEH…MPMQ). Residues 394–469 (IWRTLLGACT…VPGHSLVEVG (76 aa)) are type E motif. The type E(+) motif stretch occupies residues 470–500 (NRVHEFLMGDKSHPQSDAIYAKLKEMTGRLR). The type DYW motif stretch occupies residues 501–595 (SEGYVPQISN…NGSCSCQDYW (95 aa)).

This sequence belongs to the PPR family. PCMP-H subfamily.

The chain is Pentatricopeptide repeat-containing protein At4g21065 (PCMP-H28) from Arabidopsis thaliana (Mouse-ear cress).